The primary structure comprises 680 residues: GTPase Obg (680 aa).

One can recognise an Obg domain in the interval 2–160 (DQFIDVVSFE…LNIRLEVKLI (159 aa)). An OBG-type G domain is found at 161–336 (ADIGLVGMPN…LDGDMLDKVT (176 aa)). Residues 167–174 (GMPNTGKS), 192–196 (FTTLT), 214–217 (DIPG), 281–284 (NKTD), and 317–319 (PEI) each bind GTP. Mg(2+)-binding residues include Ser174 and Thr194. A radical SAM domain region spans residues 371 to 680 (TKRVFGPVVS…NGVLSYAVNI (310 aa)). Residues 383–613 (LGNSLGIDVI…IEIDVPSVSD (231 aa)) enclose the Radical SAM core domain. The [4Fe-4S] cluster site is built by Cys397, Cys401, and Cys404.

Belongs to the TRAFAC class OBG-HflX-like GTPase superfamily. OBG GTPase family. Monomer. The cofactor is Mg(2+). It depends on [4Fe-4S] cluster as a cofactor.

The protein resides in the cytoplasm. In terms of biological role, an essential GTPase which binds GTP, GDP and possibly (p)ppGpp with moderate affinity, with high nucleotide exchange rates and a fairly low GTP hydrolysis rate. Plays a role in control of the cell cycle, stress response, ribosome biogenesis and in those bacteria that undergo differentiation, in morphogenesis control. The polypeptide is GTPase Obg (Brachyspira hyodysenteriae (strain ATCC 49526 / WA1)).